A 977-amino-acid polypeptide reads, in one-letter code: Disks large-associated protein 3 (977 aa).

Basic and acidic residues predominate over residues 1-10 (MRGYHGDRGS). 6 disordered regions span residues 1-24 (MRGYHGDRGSHPRPARFADQQHMD), 52-96 (AGLG…MYPG), 137-167 (FHTLPYQRGPAGPGPGPGSGAAPEARSESPS), 181-289 (AKSH…CLDA), 398-417 (AMGDEESGDSDGSPKTSPKA), and 529-582 (PGSS…SADG). The span at 53-73 (GLGHLSPEGPLSLSEGPSSVG) shows a compositional bias: low complexity. Phosphoserine is present on Ser58. Gly residues predominate over residues 74-87 (PEGGPGGVGAGGGS). Residues 189–201 (PGKRDYNGPKADG) show a composition bias toward basic and acidic residues. Basic residues predominate over residues 221–245 (SHHHHHHHHHHHHQSRHGKRSKSKD). A compositionally biased stretch (low complexity) spans 258–271 (GWWSSDDNLDSDSG). Residues Ser404, Ser407, Ser410, and Ser414 each carry the phosphoserine modification. Pro residues predominate over residues 538 to 547 (APPPIPPGSQ). Ser641 and Ser643 each carry phosphoserine. Disordered stretches follow at residues 739-788 (EGYP…RTSP) and 906-939 (EEKKVPPPIPKKPSRGRGVPVKERSLDSVDRQRQ). Composition is skewed to basic and acidic residues over residues 767–777 (GRRDSWMERGS) and 925–939 (PVKERSLDSVDRQRQ). Phosphoserine is present on residues Ser930, Ser933, and Ser965.

It belongs to the SAPAP family. In terms of assembly, interacts with DLG4/PSD-95. In terms of tissue distribution, highly expressed in central and peripherical nervous system (at protein level).

It localises to the cell membrane. Its subcellular location is the postsynaptic density. It is found in the synapse. In terms of biological role, may play a role in the molecular organization of synapses and neuronal cell signaling. Could be an adapter protein linking ion channel to the subsynaptic cytoskeleton. May induce enrichment of PSD-95/SAP90 at the plasma membrane. The protein is Disks large-associated protein 3 (Dlgap3) of Mus musculus (Mouse).